The following is a 383-amino-acid chain: Chaperone protein DnaJ (383 aa).

Residues 5–69 form the J domain; the sequence is DYYDILGVSK…QKRAQYDQFG (65 aa). The CR-type zinc-finger motif lies at 138-222; the sequence is GKTTTIKYDR…CHGAGHVHER (85 aa). Residues Cys151, Cys154, Cys168, Cys171, Cys194, Cys197, Cys210, and Cys213 each coordinate Zn(2+). CXXCXGXG motif repeat units follow at residues 151 to 158, 168 to 175, 194 to 201, and 210 to 217; these read CKTCHGTG, CPRCHGAG, CPECNGTG, and CDTCHGAG.

Belongs to the DnaJ family. In terms of assembly, homodimer. Zn(2+) serves as cofactor.

It localises to the cytoplasm. Participates actively in the response to hyperosmotic and heat shock by preventing the aggregation of stress-denatured proteins and by disaggregating proteins, also in an autonomous, DnaK-independent fashion. Unfolded proteins bind initially to DnaJ; upon interaction with the DnaJ-bound protein, DnaK hydrolyzes its bound ATP, resulting in the formation of a stable complex. GrpE releases ADP from DnaK; ATP binding to DnaK triggers the release of the substrate protein, thus completing the reaction cycle. Several rounds of ATP-dependent interactions between DnaJ, DnaK and GrpE are required for fully efficient folding. Also involved, together with DnaK and GrpE, in the DNA replication of plasmids through activation of initiation proteins. The chain is Chaperone protein DnaJ from Limosilactobacillus reuteri (strain DSM 20016) (Lactobacillus reuteri).